A 189-amino-acid chain; its full sequence is Ribosome maturation factor RimM (189 aa).

The span at 1 to 16 (MAPSCPTRSRVWSSRT) shows a compositional bias: polar residues. The disordered stretch occupies residues 1–21 (MAPSCPTRSRVWSSRTSPPPD). A PRC barrel domain is found at 118-189 (ENEFYWSDLI…TVEVDWGEDY (72 aa)).

Belongs to the RimM family. As to quaternary structure, binds ribosomal protein uS19.

It localises to the cytoplasm. In terms of biological role, an accessory protein needed during the final step in the assembly of 30S ribosomal subunit, possibly for assembly of the head region. Essential for efficient processing of 16S rRNA. May be needed both before and after RbfA during the maturation of 16S rRNA. It has affinity for free ribosomal 30S subunits but not for 70S ribosomes. The protein is Ribosome maturation factor RimM of Thiobacillus denitrificans (strain ATCC 25259 / T1).